The primary structure comprises 383 residues: MGLRVAQTGFVVLVLLQSCAAYKLICYYTSWSQYREGDGSCFPDAIDPFLCTHVIYSFANISNNEIDTWEWNDVTLYDTLNTLKNRNPKLKTLLSVGGWNFGSQRFSKIASKTQSRRTFIKSVPPFLRTHGFDGLDLAWLYPGWRDKRHLTTLVKEMKAEFVREAQAGTEQLLLSAAVPAGKIAIDRGYDIAQISRHLDFISLLTYDFHGAWRQTVGHHSPLFRGQEDASSDRFSNADYAVSYMLRLGAPANKLVMGIPTFGKSYTLASSKTDVGAPISGPGIPGQFTKEKGILAYYEICDFLHGATTHRFRDQQVPYATKGNQWVAYDDQESVKNKARYLKNRQLAGAMVWALDLDDFRGTFCGQNLAFPLTNAIKDVLAGV.

The first 21 residues, 1-21 (MGLRVAQTGFVVLVLLQSCAA), serve as a signal peptide directing secretion. A GH18 domain is found at 22 to 383 (YKLICYYTSW…NAIKDVLAGV (362 aa)). The cysteines at positions 26 and 51 are disulfide-linked. A glycan (N-linked (GlcNAc...) asparagine) is linked at Asn60. Residues 70–71 (EW), 97–100 (GGWN), Tyr141, 204–207 (LTYD), and Lys263 contribute to the chitin site. Cys300 and Cys364 are disulfide-bonded. The important for AKT1 activation and IL8 production stretch occupies residues 324 to 338 (QWVAYDDQESVKNKA). Trp352 contributes to the chitin binding site.

This sequence belongs to the glycosyl hydrolase 18 family. In terms of assembly, monomer. As to expression, detected in mammary gland.

The protein resides in the secreted. Its subcellular location is the extracellular space. It localises to the cytoplasm. The protein localises to the perinuclear region. It is found in the endoplasmic reticulum. Its function is as follows. Carbohydrate-binding lectin with a preference for chitin. Has no chitinase activity. May play a role in tissue remodeling and in the capacity of cells to respond to and cope with changes in their environment. Plays a role in T-helper cell type 2 (Th2) inflammatory response and IL-13-induced inflammation, regulating allergen sensitization, inflammatory cell apoptosis, dendritic cell accumulation and M2 macrophage differentiation. Facilitates invasion of pathogenic enteric bacteria into colonic mucosa and lymphoid organs. Mediates activation of AKT1 signaling pathway and subsequent IL8 production in colonic epithelial cells. Regulates antibacterial responses in lung by contributing to macrophage bacterial killing, controlling bacterial dissemination and augmenting host tolerance. Also regulates hyperoxia-induced injury, inflammation and epithelial apoptosis in lung. The sequence is that of Chitinase-3-like protein 1 (CHI3L1) from Bubalus bubalis (Domestic water buffalo).